The sequence spans 614 residues: Chaperone protein DnaK (614 aa).

Phosphothreonine; by autocatalysis is present on threonine 175. Positions 577 to 614 are disordered; the sequence is QAGGAEGAADPNAAAGGAQSAPHDDNVVDADFKVDEDK. Residues 583 to 597 are compositionally biased toward low complexity; sequence GAADPNAAAGGAQSA. The span at 598-614 shows a compositional bias: basic and acidic residues; it reads PHDDNVVDADFKVDEDK.

The protein belongs to the heat shock protein 70 family.

In terms of biological role, acts as a chaperone. The chain is Chaperone protein DnaK from Clostridium beijerinckii (strain ATCC 51743 / NCIMB 8052) (Clostridium acetobutylicum).